The primary structure comprises 254 residues: Type II methyl-directed restriction enzyme DpnI (254 aa).

It belongs to the DpnI type II restriction endonuclease family.

It carries out the reaction Endonucleolytic cleavage of DNA to give specific double-stranded fragments with terminal 5'-phosphates.. An M and P subtype restriction enzyme that recognizes the double-stranded, methylated sequence 5'-G(Me)ATC-3' and cleaves after A-2. The protein is Type II methyl-directed restriction enzyme DpnI of Streptococcus pneumoniae serotype 4 (strain ATCC BAA-334 / TIGR4).